Here is a 617-residue protein sequence, read N- to C-terminus: Protein kinase STUNTED (617 aa).

Residues 162-187 form a disordered region; sequence SSELSEGFSDKDLAKTTGQEKRKISG. Residues 169–184 are compositionally biased toward basic and acidic residues; the sequence is FSDKDLAKTTGQEKRK. Residues 277 to 555 enclose the Protein kinase domain; it reads FSLENLIGKG…RGEDDVSKWV (279 aa). Residues 283 to 291 and Lys305 each bind ATP; that span reads IGKGGCNEV. The residue at position 350 (Tyr350) is a Phosphotyrosine. The Proton acceptor role is filled by Asp399. Position 403 is a phosphoserine (Ser403). Position 439 is a phosphothreonine (Thr439). Position 447 is a phosphotyrosine (Tyr447). The segment at 590–617 is disordered; the sequence is DSVSNSSLERSNNSLFSSSSSSSQELQS. Residues 591–617 are compositionally biased toward low complexity; it reads SVSNSSLERSNNSLFSSSSSSSQELQS.

Belongs to the protein kinase superfamily. Ser/Thr protein kinase family. As to expression, expressed ubiquitously, mostly in roots, to a lower extent in leaves, floral buds and stems, and, at low levels, in flowers and siliques.

It localises to the cytoplasm. Promotes cell proliferation in the gibberellic acid (GA) signaling pathway, acting downstream of RGA, and possibly through a negative regulation of two cyclin-dependent kinase inhibitors SIM and SMR1. The chain is Protein kinase STUNTED from Arabidopsis thaliana (Mouse-ear cress).